A 159-amino-acid polypeptide reads, in one-letter code: Ribosome maturation factor RimP (159 aa).

Belongs to the RimP family.

Its subcellular location is the cytoplasm. Its function is as follows. Required for maturation of 30S ribosomal subunits. In Geotalea uraniireducens (strain Rf4) (Geobacter uraniireducens), this protein is Ribosome maturation factor RimP.